Reading from the N-terminus, the 294-residue chain is tRNA dimethylallyltransferase (294 aa).

Position 10–17 (10–17 (GPTAVGKT)) interacts with ATP. Position 12–17 (12–17 (TAVGKT)) interacts with substrate. The interaction with substrate tRNA stretch occupies residues 35-38 (DSQQ).

Belongs to the IPP transferase family. As to quaternary structure, monomer. Mg(2+) is required as a cofactor.

It carries out the reaction adenosine(37) in tRNA + dimethylallyl diphosphate = N(6)-dimethylallyladenosine(37) in tRNA + diphosphate. Functionally, catalyzes the transfer of a dimethylallyl group onto the adenine at position 37 in tRNAs that read codons beginning with uridine, leading to the formation of N6-(dimethylallyl)adenosine (i(6)A). This Streptococcus sanguinis (strain SK36) protein is tRNA dimethylallyltransferase.